The sequence spans 163 residues: MAVGGFEMRIGNGYDFHRLVEGRRLILGGVEIPYRLGLLGHSDADLLTHAITDALLGAACLGDIGRHFPPGDPQWQDVSSLLLLSKVLELVRGRGLRLSNVDAVVVAERPKLAPHIPAIRQSLAGALGLPLDRLSVKATTNEGLGPVGEGLAMACHAVVLLEE.

A divalent metal cation-binding residues include aspartate 15 and histidine 17. Residues 15–17 (DFH) and 41–42 (HS) each bind 4-CDP-2-C-methyl-D-erythritol 2-phosphate. Histidine 49 serves as a coordination point for a divalent metal cation. 4-CDP-2-C-methyl-D-erythritol 2-phosphate is bound by residues 63-65 (DIG) and 139-142 (TTNE).

This sequence belongs to the IspF family. Homotrimer. It depends on a divalent metal cation as a cofactor.

It catalyses the reaction 4-CDP-2-C-methyl-D-erythritol 2-phosphate = 2-C-methyl-D-erythritol 2,4-cyclic diphosphate + CMP. It functions in the pathway isoprenoid biosynthesis; isopentenyl diphosphate biosynthesis via DXP pathway; isopentenyl diphosphate from 1-deoxy-D-xylulose 5-phosphate: step 4/6. Its function is as follows. Involved in the biosynthesis of isopentenyl diphosphate (IPP) and dimethylallyl diphosphate (DMAPP), two major building blocks of isoprenoid compounds. Catalyzes the conversion of 4-diphosphocytidyl-2-C-methyl-D-erythritol 2-phosphate (CDP-ME2P) to 2-C-methyl-D-erythritol 2,4-cyclodiphosphate (ME-CPP) with a corresponding release of cytidine 5-monophosphate (CMP). The chain is 2-C-methyl-D-erythritol 2,4-cyclodiphosphate synthase from Gloeobacter violaceus (strain ATCC 29082 / PCC 7421).